Here is a 440-residue protein sequence, read N- to C-terminus: Transposon Ty1-PR3 Gag polyprotein (440 aa).

Polar residues-rich tracts occupy residues 1–23, 48–60, and 127–152; these read MESQQLSNYSPISHGSACASVTS, TKANSQQTTTPAS, and QSQFPQYPSSVGTPLSTPSPESGNTF. Disordered stretches follow at residues 1–93, 126–173, and 352–440; these read MESQ…MMTQ, PQSQ…RPPP, and GSRN…PGTY. Over residues 153 to 165 the composition is skewed to low complexity; it reads TDSSSADSDMTST. The RNA-binding stretch occupies residues 299-401; that stretch reads NNGIHINNKV…NSKSKTARAH (103 aa). Residues 402–418 show a composition bias toward low complexity; sequence NVSTSNNSPSTDNDSIS. Position 416 is a phosphoserine (Ser-416). Over residues 419 to 428 the composition is skewed to polar residues; it reads KSTTEPIQLN. Residues 429 to 440 are compositionally biased toward basic and acidic residues; sequence NKHDLHLRPGTY.

In terms of assembly, homotrimer.

The protein localises to the cytoplasm. Its function is as follows. Capsid protein (CA) is the structural component of the virus-like particle (VLP), forming the shell that encapsulates the retrotransposons dimeric RNA genome. The particles are assembled from trimer-clustered units and there are holes in the capsid shells that allow for the diffusion of macromolecules. CA also has nucleocapsid-like chaperone activity, promoting primer tRNA(i)-Met annealing to the multipartite primer-binding site (PBS), dimerization of Ty1 RNA and initiation of reverse transcription. This is Transposon Ty1-PR3 Gag polyprotein (TY1A-PR3) from Saccharomyces cerevisiae (strain ATCC 204508 / S288c) (Baker's yeast).